The chain runs to 513 residues: GMP synthase [glutamine-hydrolyzing] (513 aa).

The Glutamine amidotransferase type-1 domain maps to 8–198 (MILVLDFGSQ…VFGVCDCDGK (191 aa)). The active-site Nucleophile is C85. Residues H172 and E174 contribute to the active site. A GMPS ATP-PPase domain is found at 199-388 (WSMENFIEIE…LGIPDDIVWR (190 aa)). Position 226 to 232 (226 to 232 (SGGVDSS)) interacts with ATP.

Homodimer.

The catalysed reaction is XMP + L-glutamine + ATP + H2O = GMP + L-glutamate + AMP + diphosphate + 2 H(+). It functions in the pathway purine metabolism; GMP biosynthesis; GMP from XMP (L-Gln route): step 1/1. Catalyzes the synthesis of GMP from XMP. In Bacillus pumilus (strain SAFR-032), this protein is GMP synthase [glutamine-hydrolyzing].